The following is a 414-amino-acid chain: Seminal vesicle secretory protein 2 (414 aa).

The N-terminal stretch at 1 to 22 (MKSSVFILSLFLLLERQAAVVG) is a signal peptide. The residue at position 23 (Gln23) is a Pyrrolidone carboxylic acid. Repeat copies occupy residues 108 to 120 (ESQI…VKSS), 127 to 139 (GSQL…VKSS), 140 to 152 (ESQL…VKAS), 153 to 165 (GSQL…VKAS), 166 to 178 (GSQL…MKSS), 179 to 191 (GSQV…MKSS), 192 to 204 (GSQV…MKAS), 205 to 217 (ESQI…RKSQ), 224 to 236 (YGQM…TKSL), 237 to 249 (ESQA…VKSQ), 257 to 269 (YGQR…ETQL), 275 to 287 (DAQL…QKSQ), and 299 to 311 (SAQL…QKSL). Residues 108 to 311 (ESQIKSFRQV…LKSFGQQKSL (204 aa)) form a 13 X 13 AA tandem repeats region. 3 disordered regions span residues 170-228 (KSYG…GQMK), 240-294 (AKSF…SFSQ), and 306-369 (GQQK…FGQE). The span at 240-259 (AKSFGQVKSQSGQMKSSYGQ) shows a compositional bias: polar residues. The span at 277-294 (QLKSYGQQKSQKQSSFSQ) shows a compositional bias: low complexity. Composition is skewed to polar residues over residues 306-321 (GQQK…TQQK) and 342-351 (SVQQKSTQQM). The span at 358–369 (SQFGQQRQFGQE) shows a compositional bias: low complexity.

The repeating unit appears to be involved in the formation of the copulatory plug via a transglutaminase reaction cross-linking glutamine and lysine residues.

Its function is as follows. The rat seminal vesicle contains six major androgen-dependent secretory proteins referred to as SVS I-VI. The SVS I-III proteins appear to be components of the rat copulatory plug, with the SVS II protein being the major component. The polypeptide is Seminal vesicle secretory protein 2 (Svs2) (Rattus norvegicus (Rat)).